The sequence spans 644 residues: Threonine--tRNA ligase (644 aa).

One can recognise a TGS domain in the interval 8–70 (VKAMVITLRD…EEDGELEILT (63 aa)). The interval 251–541 (DHRKLGKELD…LTEHFAGAFP (291 aa)) is catalytic. Residues Cys-342, His-393, and His-518 each contribute to the Zn(2+) site.

It belongs to the class-II aminoacyl-tRNA synthetase family. Homodimer. The cofactor is Zn(2+).

The protein localises to the cytoplasm. It carries out the reaction tRNA(Thr) + L-threonine + ATP = L-threonyl-tRNA(Thr) + AMP + diphosphate + H(+). Catalyzes the attachment of threonine to tRNA(Thr) in a two-step reaction: L-threonine is first activated by ATP to form Thr-AMP and then transferred to the acceptor end of tRNA(Thr). Also edits incorrectly charged L-seryl-tRNA(Thr). This is Threonine--tRNA ligase from Caldanaerobacter subterraneus subsp. tengcongensis (strain DSM 15242 / JCM 11007 / NBRC 100824 / MB4) (Thermoanaerobacter tengcongensis).